Reading from the N-terminus, the 550-residue chain is Hydroxylamine reductase (550 aa).

[2Fe-2S] cluster-binding residues include Cys3, Cys6, Cys18, and Cys25. His249, Glu273, Cys317, Cys405, Cys433, Cys458, Glu492, and Lys494 together coordinate hybrid [4Fe-2O-2S] cluster. The residue at position 405 (Cys405) is a Cysteine persulfide.

This sequence belongs to the HCP family. The cofactor is [2Fe-2S] cluster. Requires hybrid [4Fe-2O-2S] cluster as cofactor.

Its subcellular location is the cytoplasm. It catalyses the reaction A + NH4(+) + H2O = hydroxylamine + AH2 + H(+). Functionally, catalyzes the reduction of hydroxylamine to form NH(3) and H(2)O. The chain is Hydroxylamine reductase from Shigella boydii serotype 18 (strain CDC 3083-94 / BS512).